The following is a 209-amino-acid chain: Mitochondrial import inner membrane translocase subunit Tim23 (209 aa).

Transmembrane regions (helical) follow at residues 73–93, 125–145, and 181–197; these read FELA…FGAM, ALWA…GVII, and GLAG…YNNW.

Belongs to the Tim17/Tim22/Tim23 family. As to quaternary structure, component of the TIM23 complex at least composed of TIMM23, TIMM17 (TIMM17A or TIMM17B) and TIMM50; within this complex, directly interacts with TIMM50. The complex interacts with the TIMM44 component of the PAM complex and with DNAJC15. Upon mitochondrial depolarization, interacts with PINK1; the interaction is required for PINK1 accumulation at the outer mitochondrial membrane, kinase activation by autophosphorylation and PRKN recruitement to mitochondria.

It is found in the mitochondrion inner membrane. In terms of biological role, essential component of the TIM23 complex, a complex that mediates the translocation of transit peptide-containing proteins across the mitochondrial inner membrane. Has a role in the activation of stress-induced mitophagy by protecting PINK1 from OMA1-mediated degradation and facilitating its accumulation at the outer mitochondrial membrane in response to depolarization. This chain is Mitochondrial import inner membrane translocase subunit Tim23 (Timm23), found in Mus musculus (Mouse).